A 229-amino-acid polypeptide reads, in one-letter code: Uracil-DNA glycosylase (229 aa).

The active-site Proton acceptor is the D70.

The protein belongs to the uracil-DNA glycosylase (UDG) superfamily. UNG family.

Its subcellular location is the cytoplasm. It catalyses the reaction Hydrolyzes single-stranded DNA or mismatched double-stranded DNA and polynucleotides, releasing free uracil.. In terms of biological role, excises uracil residues from the DNA which can arise as a result of misincorporation of dUMP residues by DNA polymerase or due to deamination of cytosine. The chain is Uracil-DNA glycosylase from Chlamydia trachomatis serovar A (strain ATCC VR-571B / DSM 19440 / HAR-13).